The following is a 32-amino-acid chain: Variegin (32 aa).

Residues 1-32 (SDQGDVAEPKMHKTAPPFDFEAIPEEYLDDES) are disordered. The tract at residues 8-14 (EPKMHKT) is contains the active site. Thr14 is a glycosylation site (O-linked (Hex) threonine). A compositionally biased stretch (acidic residues) spans 22–32 (AIPEEYLDDES).

In terms of assembly, interacts with human F2 (thrombin); the interaction results in thrombin inhibition.

The protein localises to the secreted. Its function is as follows. Thrombin inhibitor. Does not inhibit other serine proteases. The polypeptide is Variegin (Amblyomma variegatum (Tropical bont tick)).